The chain runs to 365 residues: tRNA(Met) cytidine acetate ligase (365 aa).

ATP is bound by residues 7 to 20 (IAEF…HKYL), glycine 96, asparagine 152, and arginine 175.

Belongs to the TmcAL family.

The protein localises to the cytoplasm. It catalyses the reaction cytidine(34) in elongator tRNA(Met) + acetate + ATP = N(4)-acetylcytidine(34) in elongator tRNA(Met) + AMP + diphosphate. Catalyzes the formation of N(4)-acetylcytidine (ac(4)C) at the wobble position of elongator tRNA(Met), using acetate and ATP as substrates. First activates an acetate ion to form acetyladenylate (Ac-AMP) and then transfers the acetyl group to tRNA to form ac(4)C34. This is tRNA(Met) cytidine acetate ligase from Streptococcus pneumoniae serotype 4 (strain ATCC BAA-334 / TIGR4).